The primary structure comprises 314 residues: MSWIEKILNKSNITQTRKANIPEGVWTKCDSCSQVLYRAELERNLEVCPKCDHHMRISARTRLATFLDEGATTELGGELEPKDILKFRDSKKYKDRISAAQKQTQEKDALVVMKGTLSGMSVVAAAFEFAFMGGSMASVVGARFVRAVEQALADNCPLICFSSSGGARMQEALMSLMQMAKTSAALAKMQERGLPYISIMTDPTMGGVSASLAMLGDINIAEPKALIGFAGPRVIEQTVREKLPSGFQRSEFLLAKGAIDMIVRRPEMRDTLASLLSKLTHQSQPGTKPIVAEFVAEPADVEADIQISTNKEDA.

Residues 25-294 (VWTKCDSCSQ…PGTKPIVAEF (270 aa)) enclose the CoA carboxyltransferase N-terminal domain. Cys29, Cys32, Cys48, and Cys51 together coordinate Zn(2+). The segment at 29-51 (CDSCSQVLYRAELERNLEVCPKC) adopts a C4-type zinc-finger fold.

It belongs to the AccD/PCCB family. Acetyl-CoA carboxylase is a heterohexamer composed of biotin carboxyl carrier protein (AccB), biotin carboxylase (AccC) and two subunits each of ACCase subunit alpha (AccA) and ACCase subunit beta (AccD). The cofactor is Zn(2+).

It localises to the cytoplasm. It carries out the reaction N(6)-carboxybiotinyl-L-lysyl-[protein] + acetyl-CoA = N(6)-biotinyl-L-lysyl-[protein] + malonyl-CoA. It functions in the pathway lipid metabolism; malonyl-CoA biosynthesis; malonyl-CoA from acetyl-CoA: step 1/1. In terms of biological role, component of the acetyl coenzyme A carboxylase (ACC) complex. Biotin carboxylase (BC) catalyzes the carboxylation of biotin on its carrier protein (BCCP) and then the CO(2) group is transferred by the transcarboxylase to acetyl-CoA to form malonyl-CoA. The chain is Acetyl-coenzyme A carboxylase carboxyl transferase subunit beta from Photorhabdus laumondii subsp. laumondii (strain DSM 15139 / CIP 105565 / TT01) (Photorhabdus luminescens subsp. laumondii).